The chain runs to 154 residues: 6,7-dimethyl-8-ribityllumazine synthase (154 aa).

Residues phenylalanine 22, 56 to 58, and 80 to 82 contribute to the 5-amino-6-(D-ribitylamino)uracil site; these read AFE and AVI. Residue 85 to 86 participates in (2S)-2-hydroxy-3-oxobutyl phosphate binding; sequence AT. Histidine 88 acts as the Proton donor in catalysis. Phenylalanine 113 contacts 5-amino-6-(D-ribitylamino)uracil. Residue arginine 127 participates in (2S)-2-hydroxy-3-oxobutyl phosphate binding.

It belongs to the DMRL synthase family. Forms an icosahedral capsid composed of 60 subunits, arranged as a dodecamer of pentamers.

The enzyme catalyses (2S)-2-hydroxy-3-oxobutyl phosphate + 5-amino-6-(D-ribitylamino)uracil = 6,7-dimethyl-8-(1-D-ribityl)lumazine + phosphate + 2 H2O + H(+). It functions in the pathway cofactor biosynthesis; riboflavin biosynthesis; riboflavin from 2-hydroxy-3-oxobutyl phosphate and 5-amino-6-(D-ribitylamino)uracil: step 1/2. Functionally, catalyzes the formation of 6,7-dimethyl-8-ribityllumazine by condensation of 5-amino-6-(D-ribitylamino)uracil with 3,4-dihydroxy-2-butanone 4-phosphate. This is the penultimate step in the biosynthesis of riboflavin. The protein is 6,7-dimethyl-8-ribityllumazine synthase of Geobacillus kaustophilus (strain HTA426).